Reading from the N-terminus, the 360-residue chain is Glutamate 5-kinase (360 aa).

Residue Lys7 participates in ATP binding. Substrate contacts are provided by Ser47, Asp134, and Asn146. ATP-binding positions include 166–167 (TD) and 210–216 (TGGISTK). Residues 275–356 (VGKITLDDGA…SSIIVVHRDV (82 aa)) form the PUA domain.

Belongs to the glutamate 5-kinase family.

It is found in the cytoplasm. It carries out the reaction L-glutamate + ATP = L-glutamyl 5-phosphate + ADP. It participates in amino-acid biosynthesis; L-proline biosynthesis; L-glutamate 5-semialdehyde from L-glutamate: step 1/2. In terms of biological role, catalyzes the transfer of a phosphate group to glutamate to form L-glutamate 5-phosphate. The sequence is that of Glutamate 5-kinase from Prochlorococcus marinus (strain AS9601).